The sequence spans 556 residues: Undecaprenyl phosphate-alpha-4-amino-4-deoxy-L-arabinose arabinosyl transferase (556 aa).

The next 11 helical transmembrane spans lie at 5-25, 88-108, 116-136, 179-199, 207-227, 258-278, 296-316, 319-339, 355-375, 384-404, and 410-430; these read MIKL…LLPL, FASV…ALLL, LLAA…TYSV, FMTK…PVAL, LLLF…PWAL, APFW…LALL, FLLL…KGKL, YILP…SGLA, LAFG…IIMP, LTIV…AVSL, and WGYL…GSIP.

This sequence belongs to the glycosyltransferase 83 family.

Its subcellular location is the cell inner membrane. It catalyses the reaction 4-amino-4-deoxy-alpha-L-arabinopyranosyl di-trans,octa-cis-undecaprenyl phosphate + lipid IVA = lipid IIA + di-trans,octa-cis-undecaprenyl phosphate.. It functions in the pathway lipopolysaccharide metabolism; 4-amino-4-deoxy-beta-L-arabinose-lipid A biosynthesis. In terms of biological role, catalyzes the transfer of the L-Ara4N moiety of the glycolipid undecaprenyl phosphate-alpha-L-Ara4N to lipid A. The modified arabinose is attached to lipid A and is required for resistance to polymyxin and cationic antimicrobial peptides. This Pectobacterium carotovorum subsp. carotovorum (strain PC1) protein is Undecaprenyl phosphate-alpha-4-amino-4-deoxy-L-arabinose arabinosyl transferase.